A 461-amino-acid chain; its full sequence is GTPase Era, mitochondrial (461 aa).

A mitochondrion-targeting transit peptide spans Met-1–Ala-35. Residues Ala-39 to Lys-73 form a disordered region. An Era-type G domain is found at Lys-89–Gly-354. Positions Gly-97 to Ser-104 are G1. Residue Gly-97–Ser-104 participates in GTP binding. A G2 region spans residues His-123–Cys-127. The tract at residues Asp-144–Gly-147 is G3. Residues Asp-144 to Leu-148 and Asn-213 to Asp-216 each bind GTP. Residues Asn-213–Asp-216 form a G4 region. A disordered region spans residues Lys-260–Asn-319. Residues Asn-269 to Gln-284 show a composition bias toward basic and acidic residues. A compositionally biased stretch (polar residues) spans Glu-285–Asp-303. Positions Thr-304 to Asn-319 are enriched in basic and acidic residues. The segment at Leu-332–Ala-334 is G5. One can recognise a KH type-2 domain in the interval Ile-380 to Ser-461.

Belongs to the TRAFAC class TrmE-Era-EngA-EngB-Septin-like GTPase superfamily. Era GTPase family.

The protein localises to the mitochondrion matrix. It is found in the mitochondrion inner membrane. Its function is as follows. Probable GTPase that plays a role in the mitochondrial ribosomal small subunit assembly. Specifically binds the 12S mitochondrial rRNA (12S mt-rRNA) to a 33 nucleotide section delineating the 3' terminal stem-loop region. May act as a chaperone that protects the 12S mt-rRNA on the 28S mitoribosomal subunit during ribosomal small subunit assembly. This is GTPase Era, mitochondrial (ERAL1) from Gallus gallus (Chicken).